We begin with the raw amino-acid sequence, 640 residues long: Probable threonine--tRNA ligase, cytoplasmic (640 aa).

One can recognise a TGS domain in the interval 1–63 (MYEVKLKVEL…LKDCKLELMT (63 aa)).

It belongs to the class-II aminoacyl-tRNA synthetase family.

The protein resides in the cytoplasm. The catalysed reaction is tRNA(Thr) + L-threonine + ATP = L-threonyl-tRNA(Thr) + AMP + diphosphate + H(+). The protein is Probable threonine--tRNA ligase, cytoplasmic of Encephalitozoon cuniculi (strain GB-M1) (Microsporidian parasite).